We begin with the raw amino-acid sequence, 486 residues long: Ribosomal protein uS12 methylthiotransferase RimO (486 aa).

Residues 9–125 (RSVALVTLGC…LSSHLEAILH (117 aa)) enclose the MTTase N-terminal domain. Residues Cys-18, Cys-54, Cys-88, Cys-191, Cys-195, and Cys-198 each contribute to the [4Fe-4S] cluster site. One can recognise a Radical SAM core domain in the interval 177-408 (LGSGPWAPVK…RLVEELVTQR (232 aa)). Residues 410–482 (EERLGEVVEV…GADLLAEPLV (73 aa)) enclose the TRAM domain.

This sequence belongs to the methylthiotransferase family. RimO subfamily. [4Fe-4S] cluster serves as cofactor.

The protein localises to the cytoplasm. The catalysed reaction is L-aspartate(89)-[ribosomal protein uS12]-hydrogen + (sulfur carrier)-SH + AH2 + 2 S-adenosyl-L-methionine = 3-methylsulfanyl-L-aspartate(89)-[ribosomal protein uS12]-hydrogen + (sulfur carrier)-H + 5'-deoxyadenosine + L-methionine + A + S-adenosyl-L-homocysteine + 2 H(+). Its function is as follows. Catalyzes the methylthiolation of an aspartic acid residue of ribosomal protein uS12. The chain is Ribosomal protein uS12 methylthiotransferase RimO from Kineococcus radiotolerans (strain ATCC BAA-149 / DSM 14245 / SRS30216).